The sequence spans 357 residues: Mitochondrial carrier protein LEU5 (357 aa).

Transmembrane regions (helical) follow at residues 31–47 (DYIVRSGLAGGISGSCA), 103–119 (LRIFPYAAVKFVAYEQI), 136–153 (LVSGSLAGLCSVFITYPL), 208–228 (VPTVLGMIPYAGVSFFAHDLL), 269–285 (ISGGLAGMASQTAAYPF), and 325–347 (GFFVGLSIGYIKVTPMVACSFFV). Solcar repeat units follow at residues 31-122 (DYIV…IRNT), 130-231 (ESHW…LHDV), and 262-354 (LRTW…MKWN).

Belongs to the mitochondrial carrier (TC 2.A.29) family.

It is found in the mitochondrion inner membrane. Required for the accumulation of coenzyme A in the mitochondrial matrix. This Saccharomyces cerevisiae (strain ATCC 204508 / S288c) (Baker's yeast) protein is Mitochondrial carrier protein LEU5 (LEU5).